Here is a 1887-residue protein sequence, read N- to C-terminus: Nuclear pore membrane glycoprotein 210 (1887 aa).

An N-terminal signal peptide occupies residues 1–26 (MAARGRGLLLLTLSVLLAAGPSAAAA). Residues 27–1808 (KLNIPKVLLP…LFQHFLDSYQ (1782 aa)) lie on the Perinuclear space side of the membrane. N-linked (GlcNAc...) asparagine glycans are attached at residues asparagine 44, asparagine 337, asparagine 405, asparagine 484, asparagine 681, asparagine 801, asparagine 926, asparagine 1039, asparagine 1116, asparagine 1135, asparagine 1362, and asparagine 1441. Residues 1078–1151 (FPPFRLMPRK…VQAVDAETGK (74 aa)) form the BIG2 domain. A helical membrane pass occupies residues 1809–1829 (VMFFTLFALLAGTAVMIIAYH). At 1830 to 1887 (TVCTPRDLAVPAALTPRASPGHSPHYFAASSPTSPNALPPARKASPPSGLWSPAYASH) the chain is on the cytoplasmic side. The residue at position 1844 (threonine 1844) is a Phosphothreonine. The tract at residues 1853 to 1887 (PHYFAASSPTSPNALPPARKASPPSGLWSPAYASH) is disordered. Phosphoserine occurs at positions 1874, 1877, 1881, and 1886.

The protein belongs to the NUP210 family. As to quaternary structure, forms dimers and possibly higher-order oligomers. In terms of processing, N-glycosylated, but not all potential glycosylation sites may be used. Contains high-mannose type oligosaccharides. Phosphorylated at Ser-1881 in mitosis specifically; not phosphorylated in interphase. In terms of tissue distribution, ubiquitous expression, with highest levels in lung, liver, pancreas, testis, and ovary, intermediate levels in brain, kidney, and spleen, and lowest levels in heart and skeletal muscle.

The protein localises to the nucleus. It localises to the nuclear pore complex. It is found in the nucleus membrane. The protein resides in the endoplasmic reticulum membrane. In terms of biological role, nucleoporin essential for nuclear pore assembly and fusion, nuclear pore spacing, as well as structural integrity. The sequence is that of Nuclear pore membrane glycoprotein 210 (NUP210) from Homo sapiens (Human).